The primary structure comprises 346 residues: tRNA N6-adenosine threonylcarbamoyltransferase (346 aa).

Residues His117 and His121 each coordinate Fe cation. Residues 139–143, Asp172, Gly185, Asp189, and Asn278 each bind substrate; that span reads VVSGG. Residue Asp307 participates in Fe cation binding.

The protein belongs to the KAE1 / TsaD family. As to quaternary structure, may form a heterodimer with TsaB. Fe(2+) is required as a cofactor.

It is found in the cytoplasm. It catalyses the reaction L-threonylcarbamoyladenylate + adenosine(37) in tRNA = N(6)-L-threonylcarbamoyladenosine(37) in tRNA + AMP + H(+). Functionally, required for the formation of a threonylcarbamoyl group on adenosine at position 37 (t(6)A37) in tRNAs that read codons beginning with adenine. Is involved in the transfer of the threonylcarbamoyl moiety of threonylcarbamoyl-AMP (TC-AMP) to the N6 group of A37, together with TsaE and TsaB; this reaction does not require ATP in vitro. TsaD likely plays a direct catalytic role in this reaction. This is tRNA N6-adenosine threonylcarbamoyltransferase from Bacillus subtilis (strain 168).